A 440-amino-acid polypeptide reads, in one-letter code: Transposon Ty1-OL Gag polyprotein (440 aa).

Polar residues-rich tracts occupy residues 1–23, 48–60, and 127–152; these read MESQQLSNYPQISHGSACASVTS, TKANSQQTTTPAS, and QSQFPQYPSSVGTPLSTPSPESGNTF. 3 disordered regions span residues 1–93, 126–173, and 352–440; these read MESQ…MMTQ, PQSQ…RPPP, and GSRN…PGTY. Low complexity predominate over residues 153 to 165; it reads TDSSSADSDMTST. The segment at 299 to 401 is RNA-binding; that stretch reads NNGIHINNKV…NSKSKTARAH (103 aa). The span at 402 to 418 shows a compositional bias: low complexity; that stretch reads NVSTSNNSPSTDNDSIS. Position 416 is a phosphoserine (serine 416). Over residues 419–428 the composition is skewed to polar residues; that stretch reads KSTTEPIQLN. Residues 429–440 are compositionally biased toward basic and acidic residues; sequence NKHDLHLRPGTY.

Homotrimer.

The protein resides in the cytoplasm. Capsid protein (CA) is the structural component of the virus-like particle (VLP), forming the shell that encapsulates the retrotransposons dimeric RNA genome. The particles are assembled from trimer-clustered units and there are holes in the capsid shells that allow for the diffusion of macromolecules. CA also has nucleocapsid-like chaperone activity, promoting primer tRNA(i)-Met annealing to the multipartite primer-binding site (PBS), dimerization of Ty1 RNA and initiation of reverse transcription. The polypeptide is Transposon Ty1-OL Gag polyprotein (TY1A-OL) (Saccharomyces cerevisiae (strain ATCC 204508 / S288c) (Baker's yeast)).